The primary structure comprises 427 residues: N-acylglucosamine 2-epimerase (427 aa).

Positions 195–216 are leucine-zipper; that stretch reads LLNLVEQLGEADEELAGKYAEL.

Belongs to the N-acylglucosamine 2-epimerase family. Homodimer. Forms a heterodimer with renin and inhibits its activity.

The enzyme catalyses an N-acyl-D-glucosamine = an N-acyl-D-mannosamine. It participates in amino-sugar metabolism; N-acetylneuraminate degradation. With respect to regulation, inhibited by N-ethylmaleimide, 5,5'-dithiobis-2-nitrobenzoate and iodoacetic acid. In terms of biological role, catalyzes the interconversion of N-acetylglucosamine to N-acetylmannosamine. Involved in the N-glycolylneuraminic acid (Neu5Gc) degradation pathway: although human is not able to catalyze formation of Neu5Gc due to the inactive CMAHP enzyme, Neu5Gc is present in food and must be degraded. The sequence is that of N-acylglucosamine 2-epimerase (RENBP) from Homo sapiens (Human).